The chain runs to 274 residues: Transmembrane protein 106B (274 aa).

Residues 1–11 (MGKSLSHLPLH) are compositionally biased toward low complexity. The segment at 1-20 (MGKSLSHLPLHSSKEDAYDG) is disordered. G2 carries N-myristoyl glycine lipidation. The Cytoplasmic portion of the chain corresponds to 2–96 (GKSLSHLPLH…QRLRPRRTKL (95 aa)). The residue at position 33 (S33) is a Phosphoserine. A helical transmembrane segment spans residues 97 to 117 (YVMASVFVCLLLSGLAVFFLF). The Lumenal segment spans residues 118–274 (PRSIDVKYIG…EYLNVLQPQQ (157 aa)). 4 N-linked (GlcNAc...) asparagine glycosylation sites follow: N145, N151, N164, and N183. Cysteines 214 and 253 form a disulfide. N256 carries N-linked (GlcNAc...) asparagine glycosylation.

The protein belongs to the TMEM106 family. Can form homomers. Interacts (via N-terminus) with MAP6 (via C-terminus). Interacts (via C-terminus) with the vacuolar-type ATPase subunit ATP6AP1. Interacts (via N-terminus) with AP2M1 and CLTC. Interacts with TMEM106C. As to quaternary structure, (Microbial infection) Interacts with SARS coronavirus-2/SARS-CoV-2 spike protein (via RBD domain). In terms of tissue distribution, expressed in the brain, including in the frontal cortex (at protein level). Expressed in lung epithelial cells.

The protein resides in the late endosome membrane. The protein localises to the lysosome membrane. Its subcellular location is the cell membrane. Functionally, in neurons, involved in the transport of late endosomes/lysosomes. May be involved in dendrite morphogenesis and maintenance by regulating lysosomal trafficking. May act as a molecular brake for retrograde transport of late endosomes/lysosomes, possibly via its interaction with MAP6. In motoneurons, may mediate the axonal transport of lysosomes and axonal sorting at the initial segment. It remains unclear whether TMEM106B affects the transport of moving lysosomes in the anterograde or retrograde direction in neurites and whether it is important in the sorting of lysosomes in axons or in dendrites. In neurons, may also play a role in the regulation of lysosomal size and responsiveness to stress. Required for proper lysosomal acidification. In terms of biological role, (Microbial infection) Plays a role in human coronavirus SARS-CoV-2 infection, but not in common cold coronaviruses HCoV-229E and HCoV-OC43 infections. Involved in ACE2-independent SARS-CoV-2 cell entry. Required for post-endocytic stage of virus entry, facilitates spike-mediated membrane fusion. Virus attachment and endocytosis can also be mediated by other cell surface receptors. This Homo sapiens (Human) protein is Transmembrane protein 106B.